The chain runs to 287 residues: Bifunctional protein FolD (287 aa).

Residues Gly160–Ser162, Ser189, and Thr230 contribute to the NADP(+) site.

This sequence belongs to the tetrahydrofolate dehydrogenase/cyclohydrolase family. Homodimer.

It carries out the reaction (6R)-5,10-methylene-5,6,7,8-tetrahydrofolate + NADP(+) = (6R)-5,10-methenyltetrahydrofolate + NADPH. The catalysed reaction is (6R)-5,10-methenyltetrahydrofolate + H2O = (6R)-10-formyltetrahydrofolate + H(+). It participates in one-carbon metabolism; tetrahydrofolate interconversion. In terms of biological role, catalyzes the oxidation of 5,10-methylenetetrahydrofolate to 5,10-methenyltetrahydrofolate and then the hydrolysis of 5,10-methenyltetrahydrofolate to 10-formyltetrahydrofolate. This is Bifunctional protein FolD from Chlamydia caviae (strain ATCC VR-813 / DSM 19441 / 03DC25 / GPIC) (Chlamydophila caviae).